Here is a 784-residue protein sequence, read N- to C-terminus: MTSVHSLGFPRIGHKRELKKALESFWSREIDEQELQSRAAQLRDRHWRIQQTCGMDLVPVGDFSLYDHMLDMSCTLGAIPPRYGFAGGQVGLDTFFAMARGSATQPAMEMTKWFDTNYHFIVPEFHEGMDFRLSSERLFDQVKEVQALGLKAKPVLVGPITYLWLGKEKDLNAEAHHDAQHHHDDSACHGHGAPIGAACFDRLTLLPKVLPVYAEILARLAEMGVEWVQIDEPALALDLPQEWVEALESAYQTLRRDKTPKVLLATYFDSVADHAKALKALPVAGVHLDLRRAPQQLNSFLSDYPADKVLSLGVVDGRNVWRADLDAALELLQPAHKQLGDRLWVAPSCSLLHTPVDLEQETELDAELKSWLSFSVQKLDEVAIIGRALKEGVESVAQELAAARAAVASRKSSPRIHNPAVAQRLEGLGQDDGRRKSPFPIREAAQRARFKLPAFPTTSIGSFPQTPEIRKARLQNRKGELSNADYQKAMEAEIALVVKEQERLGIDVPVHGEPERNDMVEYFGEQLAGFAFTRHGWVQSYGSRYVKPPLIFGDVSRPTPMTVAWSKYAQSLTQRPMKGMLTGPVTILQWSFVRDDQPRERTALQIALAIRDEVRDLIDAGIGIIQIDEPAYREGLPLKRKDWGHYLEWASRAFRISAQIAPDDVQIHTHMCYSEFNDILPAIAAMDADVITIETSRSQMELLDAFATFNYPNEIGPGVYDIHSPRVPSVEEMVGLMEKAVKVVPAERLWINPDCGLKTRKWAEVTPALENMVEAARQVRARHG.

Residues 16–19 (RELK) and Lys-112 each bind 5-methyltetrahydropteroyltri-L-glutamate. L-homocysteine is bound by residues 460–462 (IGS) and Glu-513. L-methionine-binding positions include 460-462 (IGS) and Glu-513. Trp-590 provides a ligand contact to 5-methyltetrahydropteroyltri-L-glutamate. Residue Asp-628 participates in L-homocysteine binding. An L-methionine-binding site is contributed by Asp-628. Position 634 (Glu-634) interacts with 5-methyltetrahydropteroyltri-L-glutamate. Positions 670, 672, and 694 each coordinate Zn(2+). His-723 functions as the Proton donor in the catalytic mechanism. Cys-755 provides a ligand contact to Zn(2+).

This sequence belongs to the vitamin-B12 independent methionine synthase family. Requires Zn(2+) as cofactor.

The enzyme catalyses 5-methyltetrahydropteroyltri-L-glutamate + L-homocysteine = tetrahydropteroyltri-L-glutamate + L-methionine. It participates in amino-acid biosynthesis; L-methionine biosynthesis via de novo pathway; L-methionine from L-homocysteine (MetE route): step 1/1. Its function is as follows. Catalyzes the transfer of a methyl group from 5-methyltetrahydrofolate to homocysteine resulting in methionine formation. In Acidithiobacillus ferrooxidans (strain ATCC 23270 / DSM 14882 / CIP 104768 / NCIMB 8455) (Ferrobacillus ferrooxidans (strain ATCC 23270)), this protein is 5-methyltetrahydropteroyltriglutamate--homocysteine methyltransferase.